Consider the following 188-residue polypeptide: Pyridoxal 5'-phosphate synthase subunit PdxT (188 aa).

47-49 contributes to the L-glutamine binding site; the sequence is GES. The active-site Nucleophile is the Cys79. L-glutamine contacts are provided by residues Arg105 and 134–135; that span reads IR. Active-site charge relay system residues include His170 and Glu172.

It belongs to the glutaminase PdxT/SNO family. In the presence of PdxS, forms a dodecamer of heterodimers. Only shows activity in the heterodimer.

The catalysed reaction is aldehydo-D-ribose 5-phosphate + D-glyceraldehyde 3-phosphate + L-glutamine = pyridoxal 5'-phosphate + L-glutamate + phosphate + 3 H2O + H(+). It carries out the reaction L-glutamine + H2O = L-glutamate + NH4(+). It functions in the pathway cofactor biosynthesis; pyridoxal 5'-phosphate biosynthesis. Functionally, catalyzes the hydrolysis of glutamine to glutamate and ammonia as part of the biosynthesis of pyridoxal 5'-phosphate. The resulting ammonia molecule is channeled to the active site of PdxS. The polypeptide is Pyridoxal 5'-phosphate synthase subunit PdxT (Listeria monocytogenes serovar 1/2a (strain ATCC BAA-679 / EGD-e)).